We begin with the raw amino-acid sequence, 362 residues long: Probable dual-specificity RNA methyltransferase RlmN (362 aa).

The Proton acceptor role is filled by Glu105. The Radical SAM core domain occupies 111–344; it reads HEYGNSICVT…VTIRREQGHD (234 aa). Cys118 and Cys349 are joined by a disulfide. The [4Fe-4S] cluster site is built by Cys125, Cys129, and Cys132. S-adenosyl-L-methionine is bound by residues 175 to 176, Ser207, 230 to 232, and Asn306; these read GE and SLH. The S-methylcysteine intermediate role is filled by Cys349.

The protein belongs to the radical SAM superfamily. RlmN family. Requires [4Fe-4S] cluster as cofactor.

It localises to the cytoplasm. It catalyses the reaction adenosine(2503) in 23S rRNA + 2 reduced [2Fe-2S]-[ferredoxin] + 2 S-adenosyl-L-methionine = 2-methyladenosine(2503) in 23S rRNA + 5'-deoxyadenosine + L-methionine + 2 oxidized [2Fe-2S]-[ferredoxin] + S-adenosyl-L-homocysteine. The enzyme catalyses adenosine(37) in tRNA + 2 reduced [2Fe-2S]-[ferredoxin] + 2 S-adenosyl-L-methionine = 2-methyladenosine(37) in tRNA + 5'-deoxyadenosine + L-methionine + 2 oxidized [2Fe-2S]-[ferredoxin] + S-adenosyl-L-homocysteine. In terms of biological role, specifically methylates position 2 of adenine 2503 in 23S rRNA and position 2 of adenine 37 in tRNAs. This Bacillus thuringiensis subsp. konkukian (strain 97-27) protein is Probable dual-specificity RNA methyltransferase RlmN.